A 424-amino-acid chain; its full sequence is ATP synthase subunit beta, mitochondrial (424 aa).

The transit peptide at 1–60 (MFRLSSGLLKGGACASRSRIPQLGRSLYSTATSAGADKTQGKIHTVIGAVVDVQFNHGRL) directs the protein to the mitochondrion. Residues 187-194 (GGAGVGKT), 188-195 (GAGVGKTV), 219-220 (ER), and tyrosine 374 contribute to the ATP site.

It belongs to the ATPase alpha/beta chains family. F-type ATPases have 2 components, CF(1) - the catalytic core - and CF(0) - the membrane proton channel. CF(1) has five subunits: alpha(3), beta(3), gamma(1), delta(1), epsilon(1). CF(0) has three main subunits: a, b and c.

The protein resides in the mitochondrion. The protein localises to the mitochondrion inner membrane. It carries out the reaction ATP + H2O + 4 H(+)(in) = ADP + phosphate + 5 H(+)(out). Its function is as follows. ATP synthase subunit beta; part of the gene cluster that mediates the biosynthesis of citreoviridin, an inhibitor of the of F1-ATPase beta-subunit. Mitochondrial membrane ATP synthase (F(1)F(0) ATP synthase or Complex V) produces ATP from ADP in the presence of a proton gradient across the membrane which is generated by electron transport complexes of the respiratory chain. Whereas ctvA to ctvD constitute the core biosynthetic gene cluster, ctvE acts as a self-resistance gene. The chain is ATP synthase subunit beta, mitochondrial from Aspergillus terreus (strain NIH 2624 / FGSC A1156).